The following is a 474-amino-acid chain: Probable threonine--tRNA ligase, mitochondrial (474 aa).

The transit peptide at 1–27 directs the protein to the mitochondrion; it reads MMKLKKFQLHTPFAHSCNRVEIYTARF.

Belongs to the class-II aminoacyl-tRNA synthetase family.

It localises to the mitochondrion matrix. The enzyme catalyses tRNA(Thr) + L-threonine + ATP = L-threonyl-tRNA(Thr) + AMP + diphosphate + H(+). The chain is Probable threonine--tRNA ligase, mitochondrial from Schizosaccharomyces pombe (strain 972 / ATCC 24843) (Fission yeast).